The primary structure comprises 266 residues: Small ribosomal subunit protein uS2 (266 aa).

The protein belongs to the universal ribosomal protein uS2 family.

The polypeptide is Small ribosomal subunit protein uS2 (Paramagnetospirillum magneticum (strain ATCC 700264 / AMB-1) (Magnetospirillum magneticum)).